The following is a 432-amino-acid chain: 3-phosphoshikimate 1-carboxyvinyltransferase (432 aa).

Lys-22, Ser-23, and Arg-27 together coordinate 3-phosphoshikimate. Lys-22 contacts phosphoenolpyruvate. Phosphoenolpyruvate is bound by residues Gly-96 and Arg-127. 3-phosphoshikimate-binding residues include Ser-173, Ser-174, Gln-175, Ser-201, Asp-316, Asn-339, and Lys-343. Phosphoenolpyruvate is bound at residue Gln-175. The active-site Proton acceptor is Asp-316. Phosphoenolpyruvate contacts are provided by Arg-347, Arg-391, and Lys-416.

Belongs to the EPSP synthase family. Monomer.

It localises to the cytoplasm. The catalysed reaction is 3-phosphoshikimate + phosphoenolpyruvate = 5-O-(1-carboxyvinyl)-3-phosphoshikimate + phosphate. The protein operates within metabolic intermediate biosynthesis; chorismate biosynthesis; chorismate from D-erythrose 4-phosphate and phosphoenolpyruvate: step 6/7. Its function is as follows. Catalyzes the transfer of the enolpyruvyl moiety of phosphoenolpyruvate (PEP) to the 5-hydroxyl of shikimate-3-phosphate (S3P) to produce enolpyruvyl shikimate-3-phosphate and inorganic phosphate. This chain is 3-phosphoshikimate 1-carboxyvinyltransferase, found in Haemophilus influenzae (strain PittGG).